The chain runs to 116 residues: Flagellar transcriptional regulator FlhD (116 aa).

Belongs to the FlhD family. In terms of assembly, homodimer; disulfide-linked. Forms a heterohexamer composed of two FlhC and four FlhD subunits. Each FlhC binds a FlhD dimer, forming a heterotrimer, and a hexamer assembles by dimerization of two heterotrimers.

It localises to the cytoplasm. Functionally, functions in complex with FlhC as a master transcriptional regulator that regulates transcription of several flagellar and non-flagellar operons by binding to their promoter region. Activates expression of class 2 flagellar genes, including fliA, which is a flagellum-specific sigma factor that turns on the class 3 genes. Also regulates genes whose products function in a variety of physiological pathways. The chain is Flagellar transcriptional regulator FlhD from Pectobacterium carotovorum subsp. carotovorum (strain PC1).